The primary structure comprises 256 residues: Imidazole glycerol phosphate synthase subunit HisF (256 aa).

Residues Asp13 and Asp132 contribute to the active site.

It belongs to the HisA/HisF family. In terms of assembly, heterodimer of HisH and HisF.

The protein localises to the cytoplasm. The catalysed reaction is 5-[(5-phospho-1-deoxy-D-ribulos-1-ylimino)methylamino]-1-(5-phospho-beta-D-ribosyl)imidazole-4-carboxamide + L-glutamine = D-erythro-1-(imidazol-4-yl)glycerol 3-phosphate + 5-amino-1-(5-phospho-beta-D-ribosyl)imidazole-4-carboxamide + L-glutamate + H(+). The protein operates within amino-acid biosynthesis; L-histidine biosynthesis; L-histidine from 5-phospho-alpha-D-ribose 1-diphosphate: step 5/9. IGPS catalyzes the conversion of PRFAR and glutamine to IGP, AICAR and glutamate. The HisF subunit catalyzes the cyclization activity that produces IGP and AICAR from PRFAR using the ammonia provided by the HisH subunit. This is Imidazole glycerol phosphate synthase subunit HisF from Leptospira interrogans serogroup Icterohaemorrhagiae serovar copenhageni (strain Fiocruz L1-130).